A 144-amino-acid chain; its full sequence is Large ribosomal subunit protein uL15 (144 aa).

Polar residues predominate over residues 1–10; the sequence is MYLNTISPSR. Positions 1–51 are disordered; the sequence is MYLNTISPSRGSKHLSKRVGRGIGSGLGKTGGRGHKGQKSRSGGKVRLGFE. The segment covering 11-20 has biased composition (basic residues); the sequence is GSKHLSKRVG. Residues 21–31 are compositionally biased toward gly residues; the sequence is RGIGSGLGKTG. A compositionally biased stretch (basic residues) spans 32 to 44; sequence GRGHKGQKSRSGG.

Belongs to the universal ribosomal protein uL15 family. As to quaternary structure, part of the 50S ribosomal subunit.

Binds to the 23S rRNA. This is Large ribosomal subunit protein uL15 from Blochmanniella pennsylvanica (strain BPEN).